Reading from the N-terminus, the 122-residue chain is MARPYMIFAVLTAWFFGCNAQFGFFDQMFGGGGGGGQQQQQPQNVRSDSVWYQQQYEAAQCSHYLCPGTLSCVHFPHHCPCAWEGVEEKIELGEGIAICASKGGWAEGEFAKKVELARKGML.

The first 20 residues, 1–20 (MARPYMIFAVLTAWFFGCNA), serve as a signal peptide directing secretion.

This sequence belongs to the LCL2 family.

Its function is as follows. Probable component of the endoplasmic reticulum-associated degradation (ERAD) pathway. The polypeptide is Long chronological lifespan protein 2 (LCL2) (Leptosphaeria maculans (strain JN3 / isolate v23.1.3 / race Av1-4-5-6-7-8) (Blackleg fungus)).